A 203-amino-acid chain; its full sequence is Glycerol-3-phosphate acyltransferase (203 aa).

Transmembrane regions (helical) follow at residues 2-22, 54-74, 80-100, 114-134, and 153-173; these read LATL…AILV, CLVL…AYFL, ALGL…FFGF, LPIG…MVAI, and TWLI…LIIF.

It belongs to the PlsY family. In terms of assembly, probably interacts with PlsX.

The protein localises to the cell inner membrane. It catalyses the reaction an acyl phosphate + sn-glycerol 3-phosphate = a 1-acyl-sn-glycero-3-phosphate + phosphate. It participates in lipid metabolism; phospholipid metabolism. Its function is as follows. Catalyzes the transfer of an acyl group from acyl-phosphate (acyl-PO(4)) to glycerol-3-phosphate (G3P) to form lysophosphatidic acid (LPA). This enzyme utilizes acyl-phosphate as fatty acyl donor, but not acyl-CoA or acyl-ACP. This chain is Glycerol-3-phosphate acyltransferase, found in Pseudoalteromonas translucida (strain TAC 125).